The sequence spans 607 residues: WD repeat-containing protein 1 (607 aa).

13 WD repeats span residues Glu4–Ile45, Pro48–Thr87, Leu93–Thr135, Ser138–Gly176, Lys180–Gly218, Val224–Val263, Thr270–Lys306, Arg311–Ala351, Thr358–Val408, Leu432–Ile474, Lys480–Val518, Ser523–Leu561, and Ala566–Val604.

This sequence belongs to the WD repeat AIP1 family.

The protein resides in the cell membrane. It localises to the cytoplasm. The protein localises to the cytoskeleton. Its subcellular location is the nucleus. Induces disassembly of actin filaments in conjunction with ADF/cofilin family proteins. Doesn't sever actin filaments alone, but caps the barbed ends of filaments severed by cofilin, which blocks annealing and depolymerization and allows more extensive severing by cofilin. In Xenopus tropicalis (Western clawed frog), this protein is WD repeat-containing protein 1.